A 460-amino-acid polypeptide reads, in one-letter code: A-type ATP synthase subunit B (460 aa).

This sequence belongs to the ATPase alpha/beta chains family. In terms of assembly, has multiple subunits, A(3), B(3), C, D, E, F, G, I and K(x); there may be a few other subunits as well.

The protein resides in the cell membrane. Functionally, component of the A-type ATP synthase that produces ATP from ADP in the presence of a proton gradient across the membrane. The B chain is a regulatory subunit. The chain is A-type ATP synthase subunit B from Methanosarcina mazei (strain ATCC BAA-159 / DSM 3647 / Goe1 / Go1 / JCM 11833 / OCM 88) (Methanosarcina frisia).